The sequence spans 259 residues: Hydroxyacylglutathione hydrolase (259 aa).

His-56, His-58, Asp-60, His-61, His-112, Asp-133, and His-171 together coordinate Zn(2+). Residues 220 to 243 (NPFLRTGETSVKEKADERSDAQNT) are disordered. The span at 229–239 (SVKEKADERSD) shows a compositional bias: basic and acidic residues.

The protein belongs to the metallo-beta-lactamase superfamily. Glyoxalase II family. Monomer. Requires Zn(2+) as cofactor.

The catalysed reaction is an S-(2-hydroxyacyl)glutathione + H2O = a 2-hydroxy carboxylate + glutathione + H(+). The protein operates within secondary metabolite metabolism; methylglyoxal degradation; (R)-lactate from methylglyoxal: step 2/2. In terms of biological role, thiolesterase that catalyzes the hydrolysis of S-D-lactoyl-glutathione to form glutathione and D-lactic acid. The polypeptide is Hydroxyacylglutathione hydrolase (Pseudomonas syringae pv. syringae (strain B728a)).